Consider the following 308-residue polypeptide: Protein translocase subunit SecF (308 aa).

6 helical membrane passes run 14–34 (FFLL…LFGF), 134–154 (VYAV…RFEF), 158–178 (ISGI…FALL), 185–205 (TFVA…IVIF), 238–258 (SIRT…FGGI), and 267–287 (LIIG…PIWV).

Belongs to the SecD/SecF family. SecF subfamily. In terms of assembly, forms a complex with SecD. Part of the essential Sec protein translocation apparatus which comprises SecA, SecYEG and auxiliary proteins SecDF. Other proteins may also be involved.

It localises to the cell membrane. Functionally, part of the Sec protein translocase complex. Interacts with the SecYEG preprotein conducting channel. SecDF uses the proton motive force (PMF) to complete protein translocation after the ATP-dependent function of SecA. The protein is Protein translocase subunit SecF of Alicyclobacillus acidocaldarius subsp. acidocaldarius (strain ATCC 27009 / DSM 446 / BCRC 14685 / JCM 5260 / KCTC 1825 / NBRC 15652 / NCIMB 11725 / NRRL B-14509 / 104-IA) (Bacillus acidocaldarius).